Here is a 521-residue protein sequence, read N- to C-terminus: MSFSRSEAAPAAPLPDLAATLAAPRDDAFQQLGAAFVTRLPAAPLPAPYVVGFSDDAARMLGLEPALRDAPGFAELFCGNPTRDWPQASLPYASVYSGHQFGVWAGQLGDGRALTIGELAHDGRRYELQLKGAGRTPYSRMGDGRAVLRSSIREFLCSEAMHHLGIPTTRALAVIGSDQPVVREEIETSAVVTRVAQSFVRFGHFEHFFANDRPEQLRALADHVIERFYPACRDADDPYLALLAEATRRTAELVAQWQAVGFCHGVMNTDNMSILGLTIDYGPFGFIDAFDAKHVCNHSDTQGRYAYRMQPRIAHWNCFCLAQALLPLIGLHRDAPSEDARAERAVEDAHAVLGRFPEQFGPALERAMRAKLGLALEREGDAALANQLLEIMDASHADFTLTFRHLARVSKHDARGDAPVRDLFIDRDAFDRWANLYRARLSEEARDDASRAAAMNRVNPKYVLRNHLAETAIRRAKEKDFSEVERLAAVLRRPFDEQLEHDAYAALPPDWASTLEVSCSS.

8 residues coordinate ATP: G109, G111, R112, K131, D143, G144, R194, and R201. Catalysis depends on D270, which acts as the Proton acceptor. Mg(2+) contacts are provided by N271 and D280. ATP is bound at residue D280.

It belongs to the SELO family. Mg(2+) is required as a cofactor. The cofactor is Mn(2+).

It catalyses the reaction L-seryl-[protein] + ATP = 3-O-(5'-adenylyl)-L-seryl-[protein] + diphosphate. The catalysed reaction is L-threonyl-[protein] + ATP = 3-O-(5'-adenylyl)-L-threonyl-[protein] + diphosphate. The enzyme catalyses L-tyrosyl-[protein] + ATP = O-(5'-adenylyl)-L-tyrosyl-[protein] + diphosphate. It carries out the reaction L-histidyl-[protein] + UTP = N(tele)-(5'-uridylyl)-L-histidyl-[protein] + diphosphate. It catalyses the reaction L-seryl-[protein] + UTP = O-(5'-uridylyl)-L-seryl-[protein] + diphosphate. The catalysed reaction is L-tyrosyl-[protein] + UTP = O-(5'-uridylyl)-L-tyrosyl-[protein] + diphosphate. In terms of biological role, nucleotidyltransferase involved in the post-translational modification of proteins. It can catalyze the addition of adenosine monophosphate (AMP) or uridine monophosphate (UMP) to a protein, resulting in modifications known as AMPylation and UMPylation. The protein is Protein nucleotidyltransferase YdiU of Burkholderia pseudomallei (strain 1106a).